The sequence spans 323 residues: tRNA dimethylallyltransferase (323 aa).

Residue 12 to 19 (GPTAAGKT) participates in ATP binding. 14-19 (TAAGKT) lines the substrate pocket. Interaction with substrate tRNA regions lie at residues 37 to 40 (DSAL) and 161 to 165 (QRLTR).

This sequence belongs to the IPP transferase family. As to quaternary structure, monomer. The cofactor is Mg(2+).

The catalysed reaction is adenosine(37) in tRNA + dimethylallyl diphosphate = N(6)-dimethylallyladenosine(37) in tRNA + diphosphate. In terms of biological role, catalyzes the transfer of a dimethylallyl group onto the adenine at position 37 in tRNAs that read codons beginning with uridine, leading to the formation of N6-(dimethylallyl)adenosine (i(6)A). This is tRNA dimethylallyltransferase from Pseudomonas fluorescens (strain ATCC BAA-477 / NRRL B-23932 / Pf-5).